Reading from the N-terminus, the 295-residue chain is Geranylfarnesyl diphosphate synthase (295 aa).

Positions 51, 54, and 83 each coordinate isopentenyl diphosphate. Residues Asp-90 and Asp-94 each contribute to the Mg(2+) site. Arg-99 serves as a coordination point for an all-trans-polyprenyl diphosphate. Residue Arg-100 participates in isopentenyl diphosphate binding. An all-trans-polyprenyl diphosphate contacts are provided by Lys-174, Thr-175, and Gln-212.

The protein belongs to the FPP/GGPP synthase family. Homodimer. The cofactor is Mg(2+).

It catalyses the reaction isopentenyl diphosphate + (2E,6E,10E)-geranylgeranyl diphosphate = (2E,6E,10E,14E)-geranylfarnesyl diphosphate + diphosphate. Involved in biosynthesis of the polyprenyl side-chain of methanophenazine, an electron carrier utilized for methanogenesis. Catalyzes the condensation of isopentenyl pyrophosphate with the allylic pyrophosphates to yield geranylfarnesyl diphosphate (GFPP). It prefers geranylgeranyl diphosphate (GGPP) and farnesyl diphosphate (FPP) as allylic substrate. The chain is Geranylfarnesyl diphosphate synthase from Methanosarcina mazei (strain ATCC BAA-159 / DSM 3647 / Goe1 / Go1 / JCM 11833 / OCM 88) (Methanosarcina frisia).